Reading from the N-terminus, the 203-residue chain is Tic20 family protein Ycf60 (203 aa).

Transmembrane regions (helical) follow at residues 2–22 (IRLF…RLAL), 51–71 (TVPY…YVLP), 84–104 (IILP…VTFF), 131–151 (ILLF…PIEF), and 153–173 (ISFL…STIT).

The protein belongs to the Tic20 family.

Its subcellular location is the plastid. The protein resides in the chloroplast membrane. This is Tic20 family protein Ycf60 (ycf60) from Pyropia yezoensis (Susabi-nori).